Consider the following 574-residue polypeptide: Type II methyltransferase M.PaeR7I (574 aa).

This sequence belongs to the N(4)/N(6)-methyltransferase family. As to quaternary structure, monomer.

The enzyme catalyses a 2'-deoxyadenosine in DNA + S-adenosyl-L-methionine = an N(6)-methyl-2'-deoxyadenosine in DNA + S-adenosyl-L-homocysteine + H(+). Its function is as follows. A gamma subtype methylase, recognizes the double-stranded sequence 5'-CTCGAG-3', methylates A-5 on both strands, and protects the DNA from cleavage by the PaeR7I endonuclease. In Pseudomonas aeruginosa, this protein is Type II methyltransferase M.PaeR7I (paeR7IM).